Here is a 457-residue protein sequence, read N- to C-terminus: UDP-N-acetylmuramate--L-alanine ligase (457 aa).

118–124 (GTHGKTT) contacts ATP.

This sequence belongs to the MurCDEF family.

Its subcellular location is the cytoplasm. It catalyses the reaction UDP-N-acetyl-alpha-D-muramate + L-alanine + ATP = UDP-N-acetyl-alpha-D-muramoyl-L-alanine + ADP + phosphate + H(+). The protein operates within cell wall biogenesis; peptidoglycan biosynthesis. In terms of biological role, cell wall formation. The sequence is that of UDP-N-acetylmuramate--L-alanine ligase from Clostridium perfringens (strain 13 / Type A).